We begin with the raw amino-acid sequence, 138 residues long: Small ribosomal subunit protein uS11 (138 aa).

Residues 1–12 (MPPKKANAAGPK) show a composition bias toward low complexity. The segment at 1–23 (MPPKKANAAGPKKGQKTRKREKK) is disordered. Residues 13–22 (KGQKTRKREK) show a composition bias toward basic residues.

Belongs to the universal ribosomal protein uS11 family. Part of the 30S ribosomal subunit. Interacts with proteins S7 and S18. Binds to IF-3.

Located on the platform of the 30S subunit, it bridges several disparate RNA helices of the 16S rRNA. Forms part of the Shine-Dalgarno cleft in the 70S ribosome. The polypeptide is Small ribosomal subunit protein uS11 (Mycobacterium leprae (strain Br4923)).